Consider the following 56-residue polypeptide: Large ribosomal subunit protein bL32 (56 aa).

A disordered region spans residues 1–37 (MAVQQNKKSRSKRGMRRSHDALSTAQLSVDATSGELH). Basic residues predominate over residues 7–16 (KKSRSKRGMR). A compositionally biased stretch (polar residues) spans 21–31 (ALSTAQLSVDA).

The protein belongs to the bacterial ribosomal protein bL32 family.

This chain is Large ribosomal subunit protein bL32, found in Shewanella pealeana (strain ATCC 700345 / ANG-SQ1).